A 223-amino-acid polypeptide reads, in one-letter code: Adenylate kinase (223 aa).

10 to 15 is a binding site for ATP; it reads GSGKGT. The interval 30-59 is NMP; the sequence is ESGAIFRQHIGGGTELGKKAKEYIDRGDLV. Residues S31, R36, 57–59, 84–87, and Q91 each bind AMP; these read DLV and GFPR. Positions 125-164 are LID; that stretch reads GRRLCKNDNNHPNNIFIDAIKPDGDVCRVCGGSLSARADD. R126 lines the ATP pocket. AMP is bound by residues R161 and R173. G209 provides a ligand contact to ATP.

Belongs to the adenylate kinase family. In terms of assembly, monomer.

Its subcellular location is the cytoplasm. It catalyses the reaction AMP + ATP = 2 ADP. The protein operates within purine metabolism; AMP biosynthesis via salvage pathway; AMP from ADP: step 1/1. Catalyzes the reversible transfer of the terminal phosphate group between ATP and AMP. Plays an important role in cellular energy homeostasis and in adenine nucleotide metabolism. The chain is Adenylate kinase from Nitratidesulfovibrio vulgaris (strain DSM 19637 / Miyazaki F) (Desulfovibrio vulgaris).